Consider the following 368-residue polypeptide: Probable pectate lyase 4 (368 aa).

The signal sequence occupies residues Met1 to Ser25. Asn27 carries an N-linked (GlcNAc...) asparagine glycan. Ca(2+) is bound by residues Asp167, Asp191, and Asp195. Arg247 is an active-site residue.

Belongs to the polysaccharide lyase 1 family. Ca(2+) serves as cofactor.

It carries out the reaction Eliminative cleavage of (1-&gt;4)-alpha-D-galacturonan to give oligosaccharides with 4-deoxy-alpha-D-galact-4-enuronosyl groups at their non-reducing ends.. It participates in glycan metabolism; pectin degradation; 2-dehydro-3-deoxy-D-gluconate from pectin: step 2/5. This is Probable pectate lyase 4 from Arabidopsis thaliana (Mouse-ear cress).